Consider the following 335-residue polypeptide: Deoxyhypusine hydroxylase (335 aa).

5 HEAT-like PBS-type repeats span residues L71–D97, C104–N130, Q200–D233, F238–D264, and V271–D298. Fe cation-binding residues include H73, E74, H106, and E107. Fe cation-binding residues include H240, E241, H273, and E274.

The protein belongs to the deoxyhypusine hydroxylase family. Fe(2+) is required as a cofactor.

Its subcellular location is the cytoplasm. The protein resides in the nucleus. It catalyses the reaction [eIF5A protein]-deoxyhypusine + AH2 + O2 = [eIF5A protein]-hypusine + A + H2O. The protein operates within protein modification; eIF5A hypusination. In terms of biological role, catalyzes the hydroxylation of the N(6)-(4-aminobutyl)-L-lysine intermediate to form hypusine, an essential post-translational modification only found in mature eIF-5A factor. The chain is Deoxyhypusine hydroxylase (lia1) from Aspergillus clavatus (strain ATCC 1007 / CBS 513.65 / DSM 816 / NCTC 3887 / NRRL 1 / QM 1276 / 107).